A 560-amino-acid polypeptide reads, in one-letter code: Glutamine--tRNA ligase (560 aa).

A 'HIGH' region motif is present at residues 36 to 46 (PEPNGFAHIGH). Residues 37–39 (EPN) and 43–49 (HIGHAKA) contribute to the ATP site. The L-glutamine site is built by aspartate 69 and tyrosine 214. 263–264 (RL) provides a ligand contact to ATP. The short motif at 270 to 274 (LTSKR) is the 'KMSKS' region element.

It belongs to the class-I aminoacyl-tRNA synthetase family. As to quaternary structure, monomer.

The protein localises to the cytoplasm. It catalyses the reaction tRNA(Gln) + L-glutamine + ATP = L-glutaminyl-tRNA(Gln) + AMP + diphosphate. The polypeptide is Glutamine--tRNA ligase (Chromobacterium violaceum (strain ATCC 12472 / DSM 30191 / JCM 1249 / CCUG 213 / NBRC 12614 / NCIMB 9131 / NCTC 9757 / MK)).